The following is a 442-amino-acid chain: MDRWQDIKQVVVVGLGITGLSVVRHLRKTQPQLQVKVIDTRPTPPGVEQLPPDIALHVGSWNEAWLAEADLVVTNPGIALATPQIQTVLARGVAVVGDIELFAWAADKPVIAITGSNGKSTVTDLTGVMANACGVKCAIGGNIGVPALDLLEQEVELYVLELSSFQLETTTSLHLVAAAFLNLSEDHMDRYQGMDDYRQAKLRIFQHAKHGVVNRDDRQTYPETSHGQQSLALVTFGSDDKEFGVMSHQGESWLSYNQQPILASRELKLVGQHNVANVLVVLALLTCAGIDYRKGLSALKSYTGLTHRCQVVADNRGIKWVNDSKATNLASTQAALSGLNCAGKLYLLVGGDGKGADFSPLKPILAQLNLQLCCFGADGDQFMPLHASATRFERMEDVIEHISPQLQSGDMVMLSPACASFDQFSNFMARGDRFAELARQYA.

115–121 (GSNGKST) contributes to the ATP binding site.

It belongs to the MurCDEF family.

It localises to the cytoplasm. The catalysed reaction is UDP-N-acetyl-alpha-D-muramoyl-L-alanine + D-glutamate + ATP = UDP-N-acetyl-alpha-D-muramoyl-L-alanyl-D-glutamate + ADP + phosphate + H(+). Its pathway is cell wall biogenesis; peptidoglycan biosynthesis. Functionally, cell wall formation. Catalyzes the addition of glutamate to the nucleotide precursor UDP-N-acetylmuramoyl-L-alanine (UMA). The polypeptide is UDP-N-acetylmuramoylalanine--D-glutamate ligase (Vibrio vulnificus (strain YJ016)).